The chain runs to 388 residues: Succinate--CoA ligase [ADP-forming] subunit beta (388 aa).

Residues 9–244 (KELFARRGLP…VTQEDAREAH (236 aa)) form the ATP-grasp domain. Residues lysine 46, 53-55 (GRG), glutamate 99, threonine 102, and glutamate 107 each bind ATP. Asparagine 199 and aspartate 213 together coordinate Mg(2+). Substrate contacts are provided by residues asparagine 264 and 321 to 323 (GIV).

The protein belongs to the succinate/malate CoA ligase beta subunit family. Heterotetramer of two alpha and two beta subunits. Mg(2+) is required as a cofactor.

It carries out the reaction succinate + ATP + CoA = succinyl-CoA + ADP + phosphate. It catalyses the reaction GTP + succinate + CoA = succinyl-CoA + GDP + phosphate. It functions in the pathway carbohydrate metabolism; tricarboxylic acid cycle; succinate from succinyl-CoA (ligase route): step 1/1. In terms of biological role, succinyl-CoA synthetase functions in the citric acid cycle (TCA), coupling the hydrolysis of succinyl-CoA to the synthesis of either ATP or GTP and thus represents the only step of substrate-level phosphorylation in the TCA. The beta subunit provides nucleotide specificity of the enzyme and binds the substrate succinate, while the binding sites for coenzyme A and phosphate are found in the alpha subunit. In Hamiltonella defensa subsp. Acyrthosiphon pisum (strain 5AT), this protein is Succinate--CoA ligase [ADP-forming] subunit beta.